Here is a 151-residue protein sequence, read N- to C-terminus: Ribosome maturation factor RimP (151 aa).

Belongs to the RimP family.

The protein localises to the cytoplasm. Its function is as follows. Required for maturation of 30S ribosomal subunits. This chain is Ribosome maturation factor RimP, found in Haemophilus influenzae (strain 86-028NP).